The primary structure comprises 79 residues: WAP four-disulfide core domain protein 10A (79 aa).

The N-terminal stretch at 1 to 21 (MAPQTLLPVLVLCVLLLQAQG) is a signal peptide. Residues 34–79 (LSPEIKVCQQQPKLYLCKHLCESHRDCQANNICCSTYCGNVCMSIL) form the WAP domain. 4 cysteine pairs are disulfide-bonded: C41–C67, C50–C71, C54–C66, and C60–C75.

It localises to the secreted. The protein is WAP four-disulfide core domain protein 10A (WFDC10A) of Homo sapiens (Human).